An 86-amino-acid polypeptide reads, in one-letter code: Small ribosomal subunit protein bS20 (86 aa).

This sequence belongs to the bacterial ribosomal protein bS20 family.

Its function is as follows. Binds directly to 16S ribosomal RNA. The sequence is that of Small ribosomal subunit protein bS20 from Oceanobacillus iheyensis (strain DSM 14371 / CIP 107618 / JCM 11309 / KCTC 3954 / HTE831).